Here is a 156-residue protein sequence, read N- to C-terminus: Small ribosomal subunit protein uS7 (156 aa).

Belongs to the universal ribosomal protein uS7 family. In terms of assembly, part of the 30S ribosomal subunit. Contacts proteins S9 and S11.

Its function is as follows. One of the primary rRNA binding proteins, it binds directly to 16S rRNA where it nucleates assembly of the head domain of the 30S subunit. Is located at the subunit interface close to the decoding center, probably blocks exit of the E-site tRNA. This Gloeobacter violaceus (strain ATCC 29082 / PCC 7421) protein is Small ribosomal subunit protein uS7.